The chain runs to 86 residues: Small ribosomal subunit protein uS17 (86 aa).

Belongs to the universal ribosomal protein uS17 family. As to quaternary structure, part of the 30S ribosomal subunit.

One of the primary rRNA binding proteins, it binds specifically to the 5'-end of 16S ribosomal RNA. This Roseiflexus sp. (strain RS-1) protein is Small ribosomal subunit protein uS17.